The following is a 549-amino-acid chain: Vacuolar fusion protein MON1 homolog A (549 aa).

2 disordered regions span residues 1–90 and 109–137; these read MAAD…EQIS and EEMR…GKEE. Over residues 110–119 the composition is skewed to basic and acidic residues; it reads EMRQSQEGKL.

The protein belongs to the MON1/SAND family.

Plays an important role in membrane trafficking through the secretory apparatus. Not involved in endocytic trafficking to lysosomes. The polypeptide is Vacuolar fusion protein MON1 homolog A (MON1A) (Gallus gallus (Chicken)).